Consider the following 876-residue polypeptide: GATOR2 complex protein MIOS (876 aa).

WD repeat units lie at residues Ser-59 to Ser-101, Lys-112 to Ala-156, Gly-182 to Phe-222, Asn-224 to Phe-262, Glu-266 to Gly-307, and Arg-400 to Thr-440. The segment at Val-738–Pro-784 adopts a C4-type zinc-finger fold. Zn(2+)-binding residues include Cys-740, Cys-743, Cys-778, Cys-781, Cys-791, Cys-830, Cys-833, His-835, His-838, His-841, Cys-852, Cys-857, and Cys-861. The RING-type; atypical zinc-finger motif lies at Leu-785 to Thr-866.

The protein belongs to the WD repeat mio family. In terms of assembly, component of the GATOR2 subcomplex, composed of MIOS, SEC13, SEH1L, WDR24 and WDR59. The GATOR2 complex interacts with CASTOR1 and CASTOR2; the interaction is negatively regulated by arginine. The GATOR2 complex interacts with SESN1, SESN2 and SESN3; the interaction is negatively regulated by amino acids. Interacts with SAR1; the interaction is direct, disrupted by leucine and mediates the interaction of SAR1 with the GATOR2 complex to negatively regulate the TORC1 signaling upon leucine deprivation.

The protein localises to the lysosome membrane. Its activity is regulated as follows. The GATOR2 complex is negatively regulated by the upstream amino acid sensors CASTOR1 and SESN2, which sequester the GATOR2 complex in absence of amino acids. In the presence of abundant amino acids, GATOR2 is released from CASTOR1 and SESN2 and activated. As a component of the GATOR2 complex, functions as an activator of the amino acid-sensing branch of the mTORC1 signaling pathway. The GATOR2 complex indirectly activates mTORC1 through the inhibition of the GATOR1 subcomplex. GATOR2 probably acts as an E3 ubiquitin-protein ligase toward GATOR1. In the presence of abundant amino acids, the GATOR2 complex mediates ubiquitination of the NPRL2 core component of the GATOR1 complex, leading to GATOR1 inactivation. In the absence of amino acids, GATOR2 is inhibited, activating the GATOR1 complex. Within the GATOR2 complex, MIOS is required to prevent autoubiquitination of WDR24, the catalytic subunit of the complex. This Danio rerio (Zebrafish) protein is GATOR2 complex protein MIOS.